Here is a 496-residue protein sequence, read N- to C-terminus: Iroquois-class homeodomain protein irx-4 (496 aa).

Residues 141-203 (GSTRRKNATR…NARRRLKKEN (63 aa)) constitute a DNA-binding region (homeobox; TALE-type). The interval 203–236 (NKMTWPPRNKCSDEKRPYDEEEEEEEEEDSQKAT) is disordered. Acidic residues predominate over residues 221-231 (DEEEEEEEEED).

It belongs to the TALE/IRO homeobox family. Expressed in the neural plate in overlapping patterns with other irx members, which all share an anterior border of expression. Broadly expressed in the tailbud rhombencephalon (hindbrain). Outside the nervous system and at tailbud stages, expressed in the developing otic vesicle, branchial arches and prospective heart region.

Its subcellular location is the nucleus. Its function is as follows. Acts partially redundantly with other irx members in neural patterning. Required for formation of the posterior forebrain, midbrain, hindbrain, and to a lesser extent, spinal cord. Patterns the neuroectoderm in both the anterior/posterior and dorsal/ventral axes. Does not appear to play a role in pronephros kidney development. This is Iroquois-class homeodomain protein irx-4 from Xenopus tropicalis (Western clawed frog).